A 548-amino-acid polypeptide reads, in one-letter code: Glucose-6-phosphate isomerase (548 aa).

Catalysis depends on E359, which acts as the Proton donor. Active-site residues include H390 and K510.

This sequence belongs to the GPI family.

It localises to the cytoplasm. It catalyses the reaction alpha-D-glucose 6-phosphate = beta-D-fructose 6-phosphate. Its pathway is carbohydrate biosynthesis; gluconeogenesis. It participates in carbohydrate degradation; glycolysis; D-glyceraldehyde 3-phosphate and glycerone phosphate from D-glucose: step 2/4. Its function is as follows. Catalyzes the reversible isomerization of glucose-6-phosphate to fructose-6-phosphate. In Gloeobacter violaceus (strain ATCC 29082 / PCC 7421), this protein is Glucose-6-phosphate isomerase.